The primary structure comprises 125 residues: uncharacterized protein (125 aa).

The next 2 membrane-spanning stretches (helical) occupy residues 22–44 (TPLMVLIFFMVIDYLGDIVNAAV) and 54–73 (YMGIAKIVSVLVVIIVSVLM).

It belongs to the bacteriophage holin family. Cp-1 holin subfamily.

The protein localises to the cell membrane. This is an uncharacterized protein from Clostridium acetobutylicum (strain ATCC 824 / DSM 792 / JCM 1419 / IAM 19013 / LMG 5710 / NBRC 13948 / NRRL B-527 / VKM B-1787 / 2291 / W).